The chain runs to 76 residues: UPF0346 protein OEOE_1017 (76 aa).

This sequence belongs to the UPF0346 family.

This chain is UPF0346 protein OEOE_1017, found in Oenococcus oeni (strain ATCC BAA-331 / PSU-1).